The primary structure comprises 652 residues: Threonine--tRNA ligase (652 aa).

A TGS domain is found at 1–63 (MAEISLTFPD…TESGDFQLIT (63 aa)). A catalytic region spans residues 246–545 (DHRVIGRDLD…LIEMYKGAFP (300 aa)). The Zn(2+) site is built by Cys340, His391, and His522.

It belongs to the class-II aminoacyl-tRNA synthetase family. Homodimer. Requires Zn(2+) as cofactor.

The protein resides in the cytoplasm. It carries out the reaction tRNA(Thr) + L-threonine + ATP = L-threonyl-tRNA(Thr) + AMP + diphosphate + H(+). Catalyzes the attachment of threonine to tRNA(Thr) in a two-step reaction: L-threonine is first activated by ATP to form Thr-AMP and then transferred to the acceptor end of tRNA(Thr). Also edits incorrectly charged L-seryl-tRNA(Thr). This is Threonine--tRNA ligase from Leuconostoc mesenteroides subsp. mesenteroides (strain ATCC 8293 / DSM 20343 / BCRC 11652 / CCM 1803 / JCM 6124 / NCDO 523 / NBRC 100496 / NCIMB 8023 / NCTC 12954 / NRRL B-1118 / 37Y).